The following is a 209-amino-acid chain: tRNA (guanine-N(7)-)-methyltransferase (209 aa).

Residues D35, E60, N87, and D113 each coordinate S-adenosyl-L-methionine. D113 is a catalytic residue. K117 and D149 together coordinate substrate.

This sequence belongs to the class I-like SAM-binding methyltransferase superfamily. TrmB family.

The catalysed reaction is guanosine(46) in tRNA + S-adenosyl-L-methionine = N(7)-methylguanosine(46) in tRNA + S-adenosyl-L-homocysteine. The protein operates within tRNA modification; N(7)-methylguanine-tRNA biosynthesis. In terms of biological role, catalyzes the formation of N(7)-methylguanine at position 46 (m7G46) in tRNA. This chain is tRNA (guanine-N(7)-)-methyltransferase, found in Prochlorococcus marinus (strain MIT 9515).